The sequence spans 375 residues: E3 ubiquitin-protein ligase RNF34 (375 aa).

The segment at 56–107 adopts an FYVE-type zinc-finger fold; the sequence is EGPNIVCKACGLSFSVFRKKHVCCDCKKDFCSVCSVLQENLRRCSTCHLLQE. Residues 115–134 form the SAP 1 domain; it reads LMRLKVKDLRQYLILRNIPI. Position 169 is a phosphoserine (S169). The interval 202 to 250 is disordered; the sequence is RTLGSGALAQEPSEIASANTEDDEDDDDDDDDDDDDDEENLEDRTPGLT. The span at 221-242 shows a compositional bias: acidic residues; the sequence is TEDDEDDDDDDDDDDDDDEENL. Residues S257 and S259 each carry the phosphoserine modification. An SAP 2 domain is found at 267-281; the sequence is VEGMSVRQLKEILAR. Residues 328–363 form an RING-type zinc finger; the sequence is CRICMDAVIDCVLLECGHMVTCTKCGKRMSECPICR.

Interacts with CASP8 and CASP10. Interacts with p53/TP53; involved in p53/TP53 ubiquitination. Interacts (via RING-type zinc finger) with MDM2; the interaction stabilizes MDM2. Interacts (via RING-type zinc finger) with PPARGC1A. Interacts with NOD1. Autoubiquitinated (in vitro). Post-translationally, proteolytically cleaved by caspases upon induction of apoptosis by TNF.

The protein resides in the cell membrane. The protein localises to the endomembrane system. It is found in the nucleus. It localises to the nucleus speckle. Its subcellular location is the cytoplasm. The protein resides in the cytosol. The catalysed reaction is S-ubiquitinyl-[E2 ubiquitin-conjugating enzyme]-L-cysteine + [acceptor protein]-L-lysine = [E2 ubiquitin-conjugating enzyme]-L-cysteine + N(6)-ubiquitinyl-[acceptor protein]-L-lysine.. It participates in protein modification; protein ubiquitination. Its function is as follows. E3 ubiquitin-protein ligase that regulates several biological processes through the ubiquitin-mediated proteasomal degradation of various target proteins. Ubiquitinates the caspases CASP8 and CASP10, promoting their proteasomal degradation, to negatively regulate cell death downstream of death domain receptors in the extrinsic pathway of apoptosis. May mediate 'Lys-48'-linked polyubiquitination of RIPK1 and its subsequent proteasomal degradation thereby indirectly regulating the tumor necrosis factor-mediated signaling pathway. Negatively regulates p53/TP53 through its direct ubiquitination and targeting to proteasomal degradation. Indirectly, may also negatively regulate p53/TP53 through ubiquitination and degradation of SFN. Mediates PPARGC1A proteasomal degradation probably through ubiquitination thereby indirectly regulating the metabolism of brown fat cells. Possibly involved in innate immunity, through 'Lys-48'-linked polyubiquitination of NOD1 and its subsequent proteasomal degradation. The chain is E3 ubiquitin-protein ligase RNF34 (RNF34) from Bos taurus (Bovine).